The sequence spans 258 residues: uncharacterized protein (258 aa).

The next 5 helical transmembrane spans lie at 14 to 34, 53 to 73, 110 to 130, 185 to 205, and 238 to 258; these read LAFPWLSAVILNSFLLALAAI, VIIWAALGWRGYLVVLAYFFV, AALCALAIAFGPEPWQLWLAL, GLALAVLGYGVGLISFGGIIF, and GINTFLGAAIAIGIEATAQLI.

The protein belongs to the TMEM19 family.

The protein resides in the cell membrane. This is an uncharacterized protein from Synechocystis sp. (strain ATCC 27184 / PCC 6803 / Kazusa).